Consider the following 67-residue polypeptide: Large ribosomal subunit protein uL29 (67 aa).

The protein belongs to the universal ribosomal protein uL29 family.

The sequence is that of Large ribosomal subunit protein uL29 from Methanosarcina barkeri (strain Fusaro / DSM 804).